Reading from the N-terminus, the 123-residue chain is Secreted LysM effector Lys1 (123 aa).

Positions 1 to 20 (MMGLAKTLLLASQLTAVVVA) are cleaved as a signal peptide. The 47-residue stretch at 72 to 118 (KFCWVQAGNKCYQVAMENHISLADFLKWNPGAGSDCRTLWANTYACV) folds into the LysM domain.

The protein belongs to the secreted LysM effector family.

In terms of biological role, might have a role in sequestration of chitin oligosaccharides (breakdown products of fungal cell walls that are released during invasion and act as triggers of host immunity) to dampen host defense. The protein is Secreted LysM effector Lys1 of Pochonia chlamydosporia (strain 123) (Metacordyceps chlamydosporia).